Here is a 494-residue protein sequence, read N- to C-terminus: Homeotic protein bicoid (494 aa).

Disordered regions lie at residues 1–49 (MAQP…PPQF), 149–210 (RRRH…TAHM), and 263–293 (QQVH…AQQQ). The segment covering 14-40 (PLPHTHTHPHPHSHPHPHSHPHPHHQH) has biased composition (basic residues). Positions 97-156 (PRRTRTTFTSSQIAELEQHFLQGRYLTAPRLADLSAKLALGTAQVKIWFKNRRRRHKIQS) form a DNA-binding region, homeobox. Residues 154-163 (IQSDQHKDQS) show a composition bias toward basic and acidic residues. An RNA-binding region spans residues 433–440 (RGAAFAKF).

The protein belongs to the paired homeobox family. Bicoid subfamily. Interacts with Bin1; in vitro and yeast cells. Interacts with bin3. Maternal expression is an anterior cap concentrated in the cortical cytoplasm. Its transcript is produced maternally and sequestered near the anterior pole of the mature oocyte. After egg deposition, it is translated into protein, which diffuses toward the posterior, forming a long-range anterior gradient.

Its subcellular location is the nucleus. In terms of biological role, segment polarity transcription factor that provides positional cues for the development of head and thoracic segments. Forms a protein concentration gradient that patterns the anterior-posterior axis during embryogenesis and promotes the expression of anterior gap genes, such as hunchback (hb), ocelliless (oc), and buttonhead (btd). Binds to regulatory DNA sequences containing a 5'-TAATCC-3' sequence motif. Also binds RNA. Interacts with Bin1 to repress transcription of bicoid target genes in the anterior tip of the embryo; a process known as retraction. The protein is Homeotic protein bicoid of Drosophila melanogaster (Fruit fly).